The primary structure comprises 385 residues: Prepilin peptidase EppA (385 aa).

A run of 10 helical transmembrane segments spans residues M1 to A21, G29 to A49, W58 to W78, M80 to F100, L104 to L124, V126 to I146, T166 to D186, F187 to I207, F231 to I251, and P358 to F378.

It belongs to the peptidase A24 family.

Its subcellular location is the cell membrane. Its function is as follows. Peptidase that processes the N-terminus of prepilins. This Methanothermobacter thermautotrophicus (strain ATCC 29096 / DSM 1053 / JCM 10044 / NBRC 100330 / Delta H) (Methanobacterium thermoautotrophicum) protein is Prepilin peptidase EppA.